We begin with the raw amino-acid sequence, 202 residues long: Imidazole glycerol phosphate synthase subunit HisH (202 aa).

A Glutamine amidotransferase type-1 domain is found at 3–202 (RIVIIDYGLG…KILRNFVEMC (200 aa)). The Nucleophile role is filled by Cys79. Catalysis depends on residues His183 and Glu185.

As to quaternary structure, heterodimer of HisH and HisF.

The protein resides in the cytoplasm. The enzyme catalyses 5-[(5-phospho-1-deoxy-D-ribulos-1-ylimino)methylamino]-1-(5-phospho-beta-D-ribosyl)imidazole-4-carboxamide + L-glutamine = D-erythro-1-(imidazol-4-yl)glycerol 3-phosphate + 5-amino-1-(5-phospho-beta-D-ribosyl)imidazole-4-carboxamide + L-glutamate + H(+). It carries out the reaction L-glutamine + H2O = L-glutamate + NH4(+). The protein operates within amino-acid biosynthesis; L-histidine biosynthesis; L-histidine from 5-phospho-alpha-D-ribose 1-diphosphate: step 5/9. Its function is as follows. IGPS catalyzes the conversion of PRFAR and glutamine to IGP, AICAR and glutamate. The HisH subunit catalyzes the hydrolysis of glutamine to glutamate and ammonia as part of the synthesis of IGP and AICAR. The resulting ammonia molecule is channeled to the active site of HisF. This chain is Imidazole glycerol phosphate synthase subunit HisH, found in Methanosarcina mazei (strain ATCC BAA-159 / DSM 3647 / Goe1 / Go1 / JCM 11833 / OCM 88) (Methanosarcina frisia).